Consider the following 400-residue polypeptide: Argininosuccinate synthase (400 aa).

8–16 serves as a coordination point for ATP; it reads AYSGGLDTS. 2 residues coordinate L-citrulline: Y87 and S92. Residue G117 participates in ATP binding. L-aspartate is bound by residues T119, N123, and D124. N123 is a binding site for L-citrulline. Residues R127, S175, E259, and Y271 each contribute to the L-citrulline site.

The protein belongs to the argininosuccinate synthase family. Type 1 subfamily. Homotetramer.

Its subcellular location is the cytoplasm. It carries out the reaction L-citrulline + L-aspartate + ATP = 2-(N(omega)-L-arginino)succinate + AMP + diphosphate + H(+). It participates in amino-acid biosynthesis; L-arginine biosynthesis; L-arginine from L-ornithine and carbamoyl phosphate: step 2/3. This chain is Argininosuccinate synthase, found in Frankia alni (strain DSM 45986 / CECT 9034 / ACN14a).